The following is a 287-amino-acid chain: Pantothenate synthetase (287 aa).

Met30–His37 is an ATP binding site. His37 serves as the catalytic Proton donor. Gln61 provides a ligand contact to (R)-pantoate. Gln61 is a binding site for beta-alanine. Gly149 to Asp152 serves as a coordination point for ATP. Gln155 contacts (R)-pantoate. Residues Val178 and Leu186–Arg189 contribute to the ATP site.

The protein belongs to the pantothenate synthetase family. Homodimer.

The protein resides in the cytoplasm. The catalysed reaction is (R)-pantoate + beta-alanine + ATP = (R)-pantothenate + AMP + diphosphate + H(+). The protein operates within cofactor biosynthesis; (R)-pantothenate biosynthesis; (R)-pantothenate from (R)-pantoate and beta-alanine: step 1/1. Catalyzes the condensation of pantoate with beta-alanine in an ATP-dependent reaction via a pantoyl-adenylate intermediate. The protein is Pantothenate synthetase of Pseudomonas putida (strain GB-1).